The primary structure comprises 662 residues: MFNEKDQLAVDTLRALSIDTIEKANSGHPGLPMGAAPMAYTLWTRHLNFNPQSKDYFNRDRFVLSAGHGSALLYSLLHVSGSLELEELKQFRQWGSKTPGHPEYRHTDGVEVTTGPLGQGFAMSVGLALAEDHLAGKFNKEGYNVVDHYTYVLASDGDLMEGISHEAASFAGHNKLSKLVVLYDSNDISLDGELNKAFSENTKARFEAYGWNYLLVKDGNDLEEIDKAITTAKSQEGPTIIEVKTTIGFGSPNKAGTNGVHGAPLGEVERKLTFENYGLDPEKRFNVSEEVYEIFQNTMLKRANEDESQWNSLLEKYAETYPELAEEFKLAISGKLPKNYKDELPRFELGHNGASRADSGTVIQAISKTVPSFFGGSADLAGSNKSNVNDATDYSSETPEGKNVWFGVREFAMGAAVNGMAAHGGLHPYGATFFVFSDYLKPALRLSSIMGLNATFIFTHDSIAVGEDGPTHEPIEQLAGLRAIPNMNVIRPADGNETRVAWEVALESESTPTSLVLTRQNLPVLDVPEDVVEEGVRKGAYTVYGSEETPEFLLLASGSEVSLAVEAAKDLEKQGKSVRVVSMPNWNAFEQQSEEYKESVIPSSVTKRVAIEMASPLGWHKYVGTAGKVIAIDGFGASAPGDLVVEKYGFTKENILNQVMSL.

Histidine 28 is a binding site for substrate. Thiamine diphosphate-binding positions include histidine 68 and 115-117; that span reads GPL. Residue aspartate 156 coordinates Mg(2+). Thiamine diphosphate-binding residues include glycine 157 and asparagine 186. Mg(2+) is bound by residues asparagine 186 and isoleucine 188. Substrate contacts are provided by histidine 261, arginine 356, and serine 383. Residue histidine 261 coordinates thiamine diphosphate. The active-site Proton donor is the glutamate 410. Phenylalanine 436 is a thiamine diphosphate binding site. Substrate is bound by residues histidine 460, aspartate 468, and arginine 519.

The protein belongs to the transketolase family. Homodimer. It depends on Mg(2+) as a cofactor. Requires Ca(2+) as cofactor. The cofactor is Mn(2+). Co(2+) is required as a cofactor. Thiamine diphosphate serves as cofactor.

It catalyses the reaction D-sedoheptulose 7-phosphate + D-glyceraldehyde 3-phosphate = aldehydo-D-ribose 5-phosphate + D-xylulose 5-phosphate. The protein operates within carbohydrate biosynthesis; Calvin cycle. It functions in the pathway carbohydrate degradation; pentose phosphate pathway. Functionally, catalyzes the transfer of a two-carbon ketol group from a ketose donor to an aldose acceptor, via a covalent intermediate with the cofactor thiamine pyrophosphate. The sequence is that of Transketolase (tkt) from Staphylococcus aureus (strain COL).